Here is a 598-residue protein sequence, read N- to C-terminus: Elongation factor 4 (598 aa).

One can recognise a tr-type G domain in the interval 4–181 (KKIRNFAIIA…AIVNLIPPPQ (178 aa)). Residues 16 to 21 (DHGKST) and 128 to 131 (NKID) contribute to the GTP site.

This sequence belongs to the TRAFAC class translation factor GTPase superfamily. Classic translation factor GTPase family. LepA subfamily.

Its subcellular location is the cell membrane. The catalysed reaction is GTP + H2O = GDP + phosphate + H(+). Required for accurate and efficient protein synthesis under certain stress conditions. May act as a fidelity factor of the translation reaction, by catalyzing a one-codon backward translocation of tRNAs on improperly translocated ribosomes. Back-translocation proceeds from a post-translocation (POST) complex to a pre-translocation (PRE) complex, thus giving elongation factor G a second chance to translocate the tRNAs correctly. Binds to ribosomes in a GTP-dependent manner. The chain is Elongation factor 4 from Mesomycoplasma hyopneumoniae (strain 7448) (Mycoplasma hyopneumoniae).